We begin with the raw amino-acid sequence, 120 residues long: UPF0102 protein COXBURSA331_A1934 (120 aa).

This sequence belongs to the UPF0102 family.

This chain is UPF0102 protein COXBURSA331_A1934, found in Coxiella burnetii (strain RSA 331 / Henzerling II).